Consider the following 1272-residue polypeptide: CST complex subunit CTC1 (1272 aa).

This sequence belongs to the CTC1 family. Component of the CST complex, composed of CTC1, TEN1 and STN1. Interacts with POT1A.

Its subcellular location is the nucleus. The protein localises to the chromosome. It localises to the telomere. In terms of biological role, component of the CST complex, a complex that binds to single-stranded DNA and is required to protect telomeres from DNA degradation. The CST complex binds single-stranded DNA with high affinity in a sequence-independent manner, while isolated subunits bind DNA with low affinity by themselves. Associates with enzymatically active telomerase. This chain is CST complex subunit CTC1, found in Arabidopsis thaliana (Mouse-ear cress).